We begin with the raw amino-acid sequence, 786 residues long: Endonuclease MutS2 (786 aa).

Position 333-340 (333-340 (GPNTGGKT)) interacts with ATP. The disordered stretch occupies residues 682–709 (EKIKPSKQSAAQRPVVKVSGGGMSGPST). The Smr domain occupies 711 to 786 (LDLRGERYDQ…GSGATIVNFK (76 aa)).

Belongs to the DNA mismatch repair MutS family. MutS2 subfamily. As to quaternary structure, homodimer. Binds to stalled ribosomes, contacting rRNA.

Functionally, endonuclease that is involved in the suppression of homologous recombination and thus may have a key role in the control of bacterial genetic diversity. In terms of biological role, acts as a ribosome collision sensor, splitting the ribosome into its 2 subunits. Detects stalled/collided 70S ribosomes which it binds and splits by an ATP-hydrolysis driven conformational change. Acts upstream of the ribosome quality control system (RQC), a ribosome-associated complex that mediates the extraction of incompletely synthesized nascent chains from stalled ribosomes and their subsequent degradation. Probably generates substrates for RQC. The sequence is that of Endonuclease MutS2 from Lacticaseibacillus casei (strain BL23) (Lactobacillus casei).